The following is a 270-amino-acid chain: L-fucose dehydrogenase (270 aa).

NAD(+) is bound by residues R19, I21, D40, K41, D62, V63, N89, Y154, K158, I187, T189, and L191. Y154 (proton acceptor) is an active-site residue.

This sequence belongs to the short-chain dehydrogenases/reductases (SDR) family. Homotetramer. As to expression, detected in retina.

The protein localises to the cytoplasm. The catalysed reaction is L-fucose + NAD(+) = L-fucono-1,5-lactone + NADH + H(+). It carries out the reaction D-arabinose + NAD(+) = D-arabinono-1,5-lactone + NADH + H(+). It catalyses the reaction L-galactose + NAD(+) = L-galactono-1,5-lactone + NADH + H(+). Its pathway is carbohydrate degradation; L-fucose degradation. Functionally, catalyzes the NAD(+)-dependent oxidation of L-fucose, yielding L-fucono-1,5-lactone, which rapidly converts spontaneously to L-fucone-1,4-lactone. Can also act on D-arabinose and L-galactose, with lower catalytic efficiency. Does not use NADPH. May be the initial enzyme of the putative L-fucose degradation pathway in mammals. In Bos taurus (Bovine), this protein is L-fucose dehydrogenase (HSD17B14).